A 202-amino-acid polypeptide reads, in one-letter code: 3-isopropylmalate dehydratase small subunit (202 aa).

The protein belongs to the LeuD family. LeuD type 1 subfamily. Heterodimer of LeuC and LeuD.

The catalysed reaction is (2R,3S)-3-isopropylmalate = (2S)-2-isopropylmalate. It participates in amino-acid biosynthesis; L-leucine biosynthesis; L-leucine from 3-methyl-2-oxobutanoate: step 2/4. In terms of biological role, catalyzes the isomerization between 2-isopropylmalate and 3-isopropylmalate, via the formation of 2-isopropylmaleate. In Nocardioides sp. (strain ATCC BAA-499 / JS614), this protein is 3-isopropylmalate dehydratase small subunit.